Here is a 377-residue protein sequence, read N- to C-terminus: Anhydro-N-acetylmuramic acid kinase (377 aa).

Glycine 19–aspartate 26 serves as a coordination point for ATP.

This sequence belongs to the anhydro-N-acetylmuramic acid kinase family.

It catalyses the reaction 1,6-anhydro-N-acetyl-beta-muramate + ATP + H2O = N-acetyl-D-muramate 6-phosphate + ADP + H(+). It functions in the pathway amino-sugar metabolism; 1,6-anhydro-N-acetylmuramate degradation. The protein operates within cell wall biogenesis; peptidoglycan recycling. Functionally, catalyzes the specific phosphorylation of 1,6-anhydro-N-acetylmuramic acid (anhMurNAc) with the simultaneous cleavage of the 1,6-anhydro ring, generating MurNAc-6-P. Is required for the utilization of anhMurNAc either imported from the medium or derived from its own cell wall murein, and thus plays a role in cell wall recycling. The chain is Anhydro-N-acetylmuramic acid kinase from Roseobacter denitrificans (strain ATCC 33942 / OCh 114) (Erythrobacter sp. (strain OCh 114)).